A 983-amino-acid chain; its full sequence is Kinesin-like protein KIN-14I (983 aa).

The Calponin-homology (CH) domain maps to 44-166; sequence ASRRYEAANW…CVLAIKSYDE (123 aa). Polar residues-rich tracts occupy residues 203–214 and 278–287; these read SLSRTSSINNEK and ESTSSQNNRS. Disordered regions lie at residues 203–227 and 276–295; these read SLSRTSSINNEKAPSENDSNKLSSP and PRESTSSQNNRSFLKPLGER. A Kinesin motor domain is found at 399–724; sequence SIRVYCRVRP…LKFAERVATV (326 aa). ATP is bound at residue 481-488; sequence GQTGSGKT. Residues 731–758 are a coiled coil; it reads VNNDTSDVKELKEQIATLKAALARKEAE. 2 disordered regions span residues 802 to 824 and 921 to 983; these read TVNSPPWPPVASPGQAYREDDRS and TRSN…NARH. A compositionally biased stretch (polar residues) spans 939 to 951; it reads SPQSRNNSNNTVS.

It belongs to the TRAFAC class myosin-kinesin ATPase superfamily. Kinesin family. KIN-14 subfamily.

This chain is Kinesin-like protein KIN-14I, found in Arabidopsis thaliana (Mouse-ear cress).